The following is a 56-amino-acid chain: UPF0434 protein Ecaj_0131 (56 aa).

Belongs to the UPF0434 family.

In Ehrlichia canis (strain Jake), this protein is UPF0434 protein Ecaj_0131.